Consider the following 222-residue polypeptide: Ribonuclease HII (222 aa).

Residues 32–222 (FHIAGVDEVG…LIKRYKEDIS (191 aa)) form the RNase H type-2 domain. Residues Asp38, Glu39, and Asp130 each coordinate a divalent metal cation.

The protein belongs to the RNase HII family. The cofactor is Mn(2+). Mg(2+) is required as a cofactor.

The protein resides in the cytoplasm. The enzyme catalyses Endonucleolytic cleavage to 5'-phosphomonoester.. In terms of biological role, endonuclease that specifically degrades the RNA of RNA-DNA hybrids. This is Ribonuclease HII from Bartonella bacilliformis (strain ATCC 35685 / KC583 / Herrer 020/F12,63).